The chain runs to 301 residues: UDP-N-acetylenolpyruvoylglucosamine reductase (301 aa).

An FAD-binding PCMH-type domain is found at 27–194; that stretch reads RVGGPADVVF…LDAIFEGTPD (168 aa). Arg172 is a catalytic residue. Ser223 functions as the Proton donor in the catalytic mechanism. Residue Glu293 is part of the active site.

It belongs to the MurB family. It depends on FAD as a cofactor.

The protein localises to the cytoplasm. It carries out the reaction UDP-N-acetyl-alpha-D-muramate + NADP(+) = UDP-N-acetyl-3-O-(1-carboxyvinyl)-alpha-D-glucosamine + NADPH + H(+). It functions in the pathway cell wall biogenesis; peptidoglycan biosynthesis. Its function is as follows. Cell wall formation. This is UDP-N-acetylenolpyruvoylglucosamine reductase from Caulobacter vibrioides (strain NA1000 / CB15N) (Caulobacter crescentus).